A 172-amino-acid chain; its full sequence is uncharacterized protein (172 aa).

This is an uncharacterized protein from Mycoplasma pneumoniae (strain ATCC 29342 / M129 / Subtype 1) (Mycoplasmoides pneumoniae).